Here is a 296-residue protein sequence, read N- to C-terminus: Enoyl-CoA hydratase domain-containing protein 2, mitochondrial (296 aa).

Lysine 101 carries the post-translational modification N6-acetyllysine; alternate. An N6-succinyllysine; alternate modification is found at lysine 101.

It belongs to the enoyl-CoA hydratase/isomerase family.

It localises to the mitochondrion. In Bos taurus (Bovine), this protein is Enoyl-CoA hydratase domain-containing protein 2, mitochondrial (ECHDC2).